A 277-amino-acid chain; its full sequence is Carbonyl reductase [NADPH] 1 (277 aa).

NADP(+)-binding positions include 10-34 (VTGSNKGIGLAIVRDLCRLFSGEVV), 63-64 (DI), and Asn-90. Ser-30 carries the phosphoserine modification. Glutathione-binding positions include 95–97 (FKV) and Gln-106. Ser-140 is a binding site for substrate. 193 to 194 (AY) is a glutathione binding site. Tyr-194 acts as the Proton acceptor in catalysis. NADP(+) contacts are provided by residues 194 to 198 (YGVTK) and 231 to 233 (VRT).

This sequence belongs to the short-chain dehydrogenases/reductases (SDR) family. Monomer.

It localises to the cytoplasm. It catalyses the reaction a secondary alcohol + NADP(+) = a ketone + NADPH + H(+). The enzyme catalyses prostaglandin F2alpha + NADP(+) = prostaglandin E2 + NADPH + H(+). The catalysed reaction is prostaglandin E1 + NADP(+) = 15-oxoprostaglandin E1 + NADPH + H(+). It carries out the reaction prostaglandin D2 + NADP(+) = 15-oxoprostaglandin D2 + NADPH + H(+). It catalyses the reaction menadione + NADPH + H(+) = menadiol + NADP(+). The enzyme catalyses prostaglandin E2 + NADP(+) = 15-oxoprostaglandin E2 + NADPH + H(+). The catalysed reaction is prostaglandin F2alpha + NADP(+) = 15-oxoprostaglandin F2alpha + NADPH + H(+). It carries out the reaction daunorubicin + NADPH + H(+) = 13-dihydrodaunorubicin + NADP(+). It catalyses the reaction S-nitrosoglutathione + NADPH + H(+) = S-(hydroxysulfenamide)glutathione + NADP(+). The enzyme catalyses a primary alcohol + NADP(+) = an aldehyde + NADPH + H(+). The catalysed reaction is cortisol + NADPH + H(+) = 20beta-dihydrocortisol + NADP(+). It carries out the reaction corticosterone + NADPH + H(+) = 20beta-dihydrocorticosterone + NADP(+). Functionally, NADPH-dependent reductase with broad substrate specificity. Catalyzes the reduction of a wide variety of carbonyl compounds including quinones, prostaglandins, menadione, plus various xenobiotics. Catalyzes the reduction of the antitumor anthracyclines doxorubicin and daunorubicin to the cardiotoxic compounds doxorubicinol and daunorubicinol. Can convert prostaglandin E to prostaglandin F2-alpha. Can bind glutathione, which explains its higher affinity for glutathione-conjugated substrates. Catalyzes the reduction of S-nitrosoglutathione. In addition, participates in the glucocorticoid metabolism by catalyzing the NADPH-dependent cortisol/corticosterone into 20beta-dihydrocortisol (20b-DHF) or 20beta-corticosterone (20b-DHB), which are weak agonists of NR3C1 and NR3C2 in adipose tissue. In Macaca fascicularis (Crab-eating macaque), this protein is Carbonyl reductase [NADPH] 1.